The primary structure comprises 795 residues: Plakophilin-2 (795 aa).

A required for binding to single-stranded DNA region spans residues 1 to 318; sequence MAVPGSLAEC…MTLERAVNML (318 aa). S44 carries the phosphoserine modification. Omega-N-methylarginine is present on R46. Phosphoserine occurs at positions 82, 132, 135, 151, 154, 155, 172, 188, and 232. Disordered stretches follow at residues 197 to 233 and 245 to 274; these read GTAR…SHSA and SQAR…REPG. Polar residues predominate over residues 245 to 257; it reads SQARLQSTQSRTA. Over residues 258-268 the composition is skewed to low complexity; it reads RSSWPRSSVRS. Phosphoserine occurs at positions 265 and 287. ARM repeat units follow at residues 299–339, 343–382, 385–425, 484–530, 585–625, 633–672, 677–718, and 721–763; these read DAQL…QHES, SEAR…NLVF, NDNK…NLSS, PDGR…NLSY, PHGI…NLTA, LVAR…NLSR, QNEI…NLMQ, and YQNA…SLWA.

The protein belongs to the beta-catenin family. Interacts with DSC2. Interacts with JUP. Interacts with KRT5/CK5, KRT8/CK8, KRT14/CK14, KRT18/CK18 and VIM. Interacts (via N-terminus) with MARK3/C-TAK1. Interacts with DSP. Interacts with DSG1, DSG2 and DSG3. Interacts (via N-terminus) with CTNNB1. Interacts with CDH1. Interacts with the RNA polymerase III (Pol III) complex proteins POLR3A/RPC155, POLR3F/RPC39 and POLR3C/RPC82. Interacts with CTNNA3. Interacts (via N-terminus) with SCN5A/Nav1.5. Interacts with ANK3/ANKG and GJA1/CX43. In terms of tissue distribution, expressed in cardiomyocytes in the heart (at protein level).

Its subcellular location is the nucleus. It localises to the cell junction. It is found in the desmosome. The protein resides in the cytoplasm. In terms of biological role, a component of desmosome cell-cell junctions which are required for positive regulation of cellular adhesion. Regulates focal adhesion turnover resulting in changes in focal adhesion size, cell adhesion and cell spreading, potentially via transcriptional modulation of beta-integrins. Required to maintain gingival epithelial barrier function. Important component of the desmosome that is also required for localization of desmosome component proteins such as DSC2, DSG2 and JUP to the desmosome cell-cell junction. Required for the formation of desmosome cell junctions in cardiomyocytes, thereby required for the correct formation of the heart, specifically trabeculation and formation of the atria walls. Loss of desmosome cell junctions leads to mis-localization of DSP and DSG2 resulting in disruption of cell-cell adhesion and disordered intermediate filaments. Modulates profibrotic gene expression in cardiomyocytes via regulation of DSP expression and subsequent activation of downstream TGFB1 and MAPK14/p38 MAPK signaling. Required for cardiac sodium current propagation and electrical synchrony in cardiac myocytes, via ANK3 stabilization and modulation of SCN5A/Nav1.5 localization to cell-cell junctions. Required for mitochondrial function, nuclear envelope integrity and positive regulation of SIRT3 transcription via maintaining DES localization at its nuclear envelope and cell tip anchoring points, and thereby preserving regulation of the transcriptional program. Maintenance of nuclear envelope integrity protects against DNA damage and transcriptional dysregulation of genes, especially those involved in the electron transport chain, thereby preserving mitochondrial function and protecting against superoxide radical anion generation. Binds single-stranded DNA (ssDNA). May regulate the localization of GJA1 to gap junctions in intercalated disks of the heart. The polypeptide is Plakophilin-2 (Mus musculus (Mouse)).